The chain runs to 231 residues: Response regulator Rre1 (231 aa).

Residues 6–123 enclose the Response regulatory domain; sequence SLLLVDDEPG…ELEAIVRNLL (118 aa). Aspartate 56 is modified (4-aspartylphosphate). Positions 163 to 228 constitute an HTH luxR-type domain; the sequence is PSPIKLDFTP…ELVRFALQHG (66 aa). The H-T-H motif DNA-binding region spans 187–206; that stretch reads NKEIAAQLKTSVRNVEKYVS.

In terms of assembly, interacts with histidine kinase Hik2; may accept phosphate from Hik2.

Functionally, member of at least 2 two-component regulatory systems Hik2/Rre1 and Hik34/Rre1. Responds to hyperosmotic stress, regulates expression of at least 24 genes including dnaK2 and hspA with Hik34 and sigB (sll0306), sll0528, slr1119, slr0852 and ssr3188 with Hik2. Responds to salt stress, regulates expression of at least 24 genes including adhA, dnaK2 and hspA with Hik34. Binds the adhA promoter. Phosphorylated by Hik2 in vitro. Phosphorylated protein has 10-fold higher affinity for DNA than unphosphorylated protein. In Synechocystis sp. (strain ATCC 27184 / PCC 6803 / Kazusa), this protein is Response regulator Rre1.